The primary structure comprises 300 residues: MNRRTDADSWDPASSVGATATMVAASRARASRGPDALLDDRLAGPLVRAVGLQPLVRMIDGDTAVDDPPSSPRSLNEQIAVRTRYFDDFFTAAGAGGIRQAVILASGLDTRAYRLNWPSGMTVYEIDQPQVIEFKTRTLAEFGALPCPDHRPIGIDLREDWPSALRQRGFDAGQPTAWIAEGLLVYLPPEAQDRLFDNIAELSTPRSQVATEHFPDPNGFSGPRAQRLSERWHRMGMDLDMAELIYHGDRNTVIDYLADHGWRVRARTFEEMHAHNGFEPPDDEMMALFGGMSYVTGIRK.

S-adenosyl-L-methionine contacts are provided by residues D127 and 156-157 (DL).

The protein belongs to the UPF0677 family.

In terms of biological role, exhibits S-adenosyl-L-methionine-dependent methyltransferase activity. In Mycobacterium ulcerans (strain Agy99), this protein is Putative S-adenosyl-L-methionine-dependent methyltransferase MUL_0817.